Reading from the N-terminus, the 155-residue chain is Ribonuclease H (155 aa).

The 142-residue stretch at 1-142 (MLKQVEIFTD…CDELARAAAM (142 aa)) folds into the RNase H type-1 domain. Positions 10, 48, 70, and 134 each coordinate Mg(2+).

It belongs to the RNase H family. As to quaternary structure, monomer. The cofactor is Mg(2+).

It localises to the cytoplasm. It catalyses the reaction Endonucleolytic cleavage to 5'-phosphomonoester.. In terms of biological role, endonuclease that specifically degrades the RNA of RNA-DNA hybrids. In Salmonella paratyphi C (strain RKS4594), this protein is Ribonuclease H.